We begin with the raw amino-acid sequence, 203 residues long: Cardiotrophin-2 (203 aa).

The signal sequence occupies residues Met-1–Ala-21. Asn-43 is a glycosylation site (N-linked (GlcNAc...) asparagine).

Belongs to the IL-6 superfamily.

It is found in the secreted. In terms of biological role, may have an important role in neuronal precursor development and maturation. The sequence is that of Cardiotrophin-2 (CTF2) from Pan troglodytes (Chimpanzee).